The chain runs to 365 residues: 3-galactosyl-N-acetylglucosaminide 4-alpha-L-fucosyltransferase FUT3 (365 aa).

At 1 to 15 (MYPPGCAKVKCSWHH) the chain is on the cytoplasmic side. The chain crosses the membrane as a helical; Signal-anchor for type II membrane protein span at residues 16–34 (CLPGLLLQLLLALCFFSYL). Topologically, residues 35–365 (RMSQEKPKPK…TVPSIASWFQ (331 aa)) are lumenal. Residues asparagine 100, asparagine 158, and asparagine 189 are each glycosylated (N-linked (GlcNAc...) asparagine).

This sequence belongs to the glycosyltransferase 10 family. In terms of processing, glycosylated. In terms of tissue distribution, liver, kidney, lung and brain.

The protein resides in the golgi apparatus. Its subcellular location is the golgi stack membrane. The catalysed reaction is a beta-D-galactosyl-(1-&gt;3)-N-acetyl-beta-D-glucosaminyl derivative + GDP-beta-L-fucose = a beta-D-galactosyl-(1-&gt;3)-[alpha-L-fucosyl-(1-&gt;4)]-N-acetyl-beta-D-glucosaminyl derivative + GDP + H(+). The enzyme catalyses an N-acetyl-alpha-neuraminyl-(2-&gt;3)-beta-D-galactosyl-(1-&gt;4)-N-acetyl-beta-D-glucosaminyl derivative + GDP-beta-L-fucose = an alpha-Neu5Ac-(2-&gt;3)-beta-D-Gal-(1-&gt;4)-[alpha-L-Fuc-(1-&gt;3)]-beta-D-GlcNAc derivative + GDP + H(+). It catalyses the reaction a beta-D-galactosyl-(1-&gt;4)-N-acetyl-beta-D-glucosaminyl derivative + GDP-beta-L-fucose = a beta-D-galactosyl-(1-&gt;4)-[alpha-L-fucosyl-(1-&gt;3)]-N-acetyl-beta-D-glucosaminyl derivative + GDP + H(+). It carries out the reaction an alpha-Neu5Ac-(2-&gt;3)-beta-D-Gal-(1-&gt;4)-beta-D-GlcNAc-(1-&gt;3)-beta-D-Gal-(1-&gt;4)-[alpha-L-Fuc-(1-&gt;3)]-beta-D-GlcNAc derivative + GDP-beta-L-fucose = an alpha-Neu5Ac-(2-&gt;3)-beta-D-Gal-(1-&gt;4)-[alpha-L-Fuc-(1-&gt;3)]-beta-D-GlcNAc-(1-&gt;3)-beta-D-Gal-(1-&gt;4)-[alpha-L-Fuc-(1-&gt;3)]-beta-D-GlcNAc derivative + GDP + H(+). The catalysed reaction is Lc4Cer + GDP-beta-L-fucose = a lactoside III(4)-a-Fuc-Lc4Cer + GDP + H(+). The enzyme catalyses a beta-D-Gal-(1-&gt;3)-beta-D-GlcNAc-(1-&gt;3)-beta-D-Gal-(1-&gt;4)-beta-D-Glc-(1&lt;-&gt;1')-Cer(d18:1(4E)) + GDP-beta-L-fucose = a III(4)-a-Fuc-Lc4Cer(d18:1(4E)) + GDP + H(+). It catalyses the reaction N-acetyl-alpha-neuraminosyl-(2-&gt;3)-beta-D-galactosyl-(1-&gt;3)-[N-acetyl-alpha-neuraminosyl-(2-&gt;6)]-N-acetyl-beta-D-glucosaminyl-(1-&gt;3)-beta-D-galactosyl-(1-&gt;4)-beta-D-glucosyl-(1&lt;-&gt;1')-N-acyl-sphing-4-enine + GDP-beta-L-fucose = N-acetyl-alpha-neuraminosyl-(2-&gt;3)-beta-D-galactosyl-(1-&gt;3)-alpha-L-fucosyl-(1-&gt;4)-[N-acetyl-alpha-neuraminosyl-(2-&gt;6)-N-acetyl-beta-D-glucosaminyl-(1-&gt;3)]-beta-D-galactosyl-(1-&gt;4)-beta-D-glucosyl-(1&lt;-&gt;1')-N-acyl-sphing-4-enine + GDP + H(+). It carries out the reaction N-acetyl-alpha-neuraminosyl-(2-&gt;3)-beta-D-galactosyl-(1-&gt;3)-N-acetyl-beta-D-glucosaminyl-(1-&gt;3)-beta-D-galactosyl-(1-&gt;4)-beta-D-glucosyl-(1&lt;-&gt;1')-N-acyl-sphing-4-enine + GDP-beta-L-fucose = N-acetyl-alpha-neuraminosyl-(2-&gt;3)-beta-D-galactosyl-(1-&gt;3)-alpha-L-fucosyl-(1-&gt;4)-[N-acetyl-beta-D-glucosaminyl-(1-&gt;3)]-beta-D-galactosyl-(1-&gt;4)-beta-D-glucosyl-(1&lt;-&gt;1')-N-acyl-sphing-4-enine + GDP + H(+). The catalysed reaction is beta-D-galactosyl-(1-&gt;3)-N-acetyl-D-glucosamine + GDP-beta-L-fucose = beta-D-galactosyl-(1-&gt;3)-[alpha-L-fucosyl-(1-&gt;4)]-N-acetyl-D-glucosamine + GDP + H(+). The enzyme catalyses alpha-L-Fuc-(1-&gt;2)-beta-D-Gal-(1-&gt;3)-D-GlcNAc + GDP-beta-L-fucose = alpha-L-Fuc-(1-&gt;2)-beta-D-Gal-(1-&gt;3)-[alpha-L-Fuc-(1-&gt;4)]-D-GlcNAc + GDP + H(+). It catalyses the reaction alpha-L-Fuc-(1-&gt;2)-beta-D-Gal-(1-&gt;4)-D-GlcNAc + GDP-beta-L-fucose = alpha-L-Fuc-(1-&gt;2)-beta-D-Gal-(1-&gt;4)-[alpha-L-Fuc-(1-&gt;3)]-D-GlcNAc + GDP + H(+). It carries out the reaction beta-D-galactosyl-(1-&gt;4)-N-acetyl-D-glucosamine + GDP-beta-L-fucose = beta-D-galactosyl-(1-&gt;4)-[alpha-L-fucosyl-(1-&gt;3)]-N-acetyl-D-glucosamine + GDP + H(+). The catalysed reaction is lactose + GDP-beta-L-fucose = beta-D-galactosyl-(1-&gt;4)-[alpha-L-fucosyl-(1-&gt;3)]-D-glucose + GDP + H(+). The enzyme catalyses an alpha-Neu5Ac-(2-&gt;3)-beta-D-Gal-(1-&gt;3)-D-GlcNAc derivative + GDP-beta-L-fucose = an alpha-Neu5Ac-(2-&gt;3)-beta-D-Gal-(1-&gt;3)-[alpha-L-Fuc-(1-&gt;4)]-beta-D-GlcNAc derivative + GDP + H(+). The protein operates within protein modification; protein glycosylation. Functionally, catalyzes the transfer of L-fucose, from a guanosine diphosphate-beta-L-fucose, to both the subterminal N-acetyl glucosamine (GlcNAc) of type 1 chain (beta-D-Gal-(1-&gt;3)-beta-D-GlcNAc) glycolipids and oligosaccharides via an alpha(1,4) linkage, and the subterminal glucose (Glc) or GlcNAc of type 2 chain (beta-D-Gal-(1-&gt;4)-beta-D-GlcNAc) oligosaccharides via an alpha(1,3) linkage, independently of the presence of terminal alpha-L-fucosyl-(1,2) moieties on the terminal galactose of these acceptors and participates in the blood groups Lewis determination and expression of Lewis a (Le(a)), lewis b (Le(b)), Lewis x/SSEA-1 (Le(x)) and lewis y (Le(y)) antigens. Also catalyzes the transfer of L-fucose to subterminal GlcNAc of sialyl- and disialyl-lactotetraosylceramide to produce sialyl Lewis a (sLe(a)) and disialyl Lewis a via an alpha(1,4) linkage and therefore may regulate cell surface sialyl Lewis a expression and consequently regulates adhesive properties to E-selectin, cell proliferation and migration. Catalyzes the transfer of an L-fucose to 3'-sialyl-N-acetyllactosamine by an alpha(1,3) linkage, which allows the formation of sialyl-Lewis x structure and therefore may regulate the sialyl-Lewis x surface antigen expression and consequently adhesive properties to E-selectin. Prefers type 1 chain over type 2 acceptors. Type 1 tetrasaccharide is a better acceptor than type 1 disaccharide suggesting that a beta anomeric configuration of GlcNAc in the substrate is preferred. Lewis-positive (Le(+)) individuals have an active enzyme while Lewis-negative (Le(-)) individuals have an inactive enzyme. This chain is 3-galactosyl-N-acetylglucosaminide 4-alpha-L-fucosyltransferase FUT3, found in Bos taurus (Bovine).